We begin with the raw amino-acid sequence, 691 residues long: Elongation factor G (691 aa).

In terms of domain architecture, tr-type G spans 8–283 (KRVRNIGIAA…AVVAYLPAPD (276 aa)). GTP-binding positions include 17–24 (AHIDAGKT), 81–85 (DTPGH), and 135–138 (NKMD).

This sequence belongs to the TRAFAC class translation factor GTPase superfamily. Classic translation factor GTPase family. EF-G/EF-2 subfamily.

The protein localises to the cytoplasm. Catalyzes the GTP-dependent ribosomal translocation step during translation elongation. During this step, the ribosome changes from the pre-translocational (PRE) to the post-translocational (POST) state as the newly formed A-site-bound peptidyl-tRNA and P-site-bound deacylated tRNA move to the P and E sites, respectively. Catalyzes the coordinated movement of the two tRNA molecules, the mRNA and conformational changes in the ribosome. The polypeptide is Elongation factor G (Campylobacter lari (strain RM2100 / D67 / ATCC BAA-1060)).